Reading from the N-terminus, the 2595-residue chain is MASLFHQLQILVWKNWLGVKRQPLWTLVLILWPVIIFIILAITRTKFPPTAKPTCYLAPRNLPSTGFFPFLQTLLCDTDSKCKDTPYGPQDLLRRKGIDDALFKDSEILRKSSNLDKDSSLSFQSTQVPERRHASLATVFPSPSSDLEIPGTYTFNGSQVLARILGLEKLLKQNSTSEDIRRELCDSYSGYIVDDAFSWTFLGRNVFNKFCLSNMTLLESSLQELNKQFSQLSSDPNNQKIVFQEIVRMLSFFSQVQEQKAVWQLLSSFPNVFQNDTSLSNLFDVLRKANSVLLVVQKVYPRFATNEGFRTLQKSVKHLLYTLDSPAQGDSDNITHVWNEDDGQTLSPSSLAAQLLILENFEDALLNISANSPYIPYLACVRNVTDSLARGSPENLRLLQSTIRFKKSFLRNGSYEDYFPPVPEVLKSKLSQLRNLTELLCESETFSLIEKSCQLSDMSFGSLCEESEFDLQLLEAAELGTEIAASLLYHDNVISKKVRDLLTGDPSKINLNMDQFLEQALQMNYLENITQLIPIIEAMLHVNNSADASEKPGQLLEMFKNVEELKEDLRRTTGMSNRTIDKLLAIPIPDNRAEIISQVFWLHSCDTNITTPKLEDAMKEFCNLSLSERSRQSYLIGLTLLHYLNIYNFTYKVFFPRKDQKPVEKMMELFIRLKEILNQMASGTHPLLDKMRSLKQMHLPRSVPLTQAMYRSNRMNTPQGSFSTISQALCSQGITTEYLTAMLPSSQRPKGNHTKDFLTYKLTKEQIASKYGIPINSTPFCFSLYKDIINMPAGPVIWAFLKPMLLGRILYAPYNPVTKAIMEKSNVTLRQLAELREKSQEWMDKSPLFMNSFHLLNQAIPMLQNTLRNPFVQVFVKFSVGLDAVELLKQIDELDILRLKLENNIDIIDQLNTLSSLTVNISSCVLYDRIQAAKTIDEMEREAKRLYKSNELFGSVIFKLPSNRSWHRGYDSGNVFLPPVIKYTIRMSLKTAQTTRSLRTKIWAPGPHNSPSHNQIYGRAFIYLQDSIERAIIELQTGRNSQEIAVQVQAIPYPCFMKDNFLTSVSYSLPIVLMVAWVVFIAAFVKKLVYEKDLRLHEYMKMMGVNSCSHFFAWLIESVGFLLVTIVILIIILKFGNILPKTNGFILFLYFSDYSFSVIAMSYLISVFFNNTNIAALIGSLIYIIAFFPFIVLVTVENELSYVLKVFMSLLSPTAFSYASQYIARYEEQGIGLQWENMYTSPVQDDTTSFGWLCCLILADSFIYFLIAWYVRNVFPGTYGMAAPWYFPILPSYWKERFGCAEVKPEKSNGLMFTNIMMQNTNPSASPEYMFSSNIEPEPKDLTVGVALHGVTKIYGSKVAVDNLNLNFYEGHITSLLGPNGAGKTTTISMLTGLFGASAGTIFVYGKDIKTDLHTVRKNMGVCMQHDVLFSYLTTKEHLLLYGSIKVPHWTKKQLHEEVKRTLKDTGLYSHRHKRVGTLSGGMKRKLSISIALIGGSRVVILDEPSTGVDPCSRRSIWDVISKNKTARTIILSTHHLDEAEVLSDRIAFLEQGGLRCCGSPFYLKEAFGDGYHLTLTKKKSPNLNANAVCDTMAVTAMIQSHLPEAYLKEDIGGELVYVLPPFSTKVSGAYLSLLRALDNGMGDLNIGCYGISDTTVEEVFLNLTKESQKNSAMSLEHLTQKKIGNSNANGISTPDDLSVSSSNFTDRDDKILTRGERLDGFGLLLKKIMAILIKRFHHTRRNWKGLIAQVILPIVFVTTAMGLGTLRNSSNSYPEIQISPSLYGTSEQTAFYANYHPSTEALVSAMWDFPGIDNMCLNTSDLQCLNKDSLEKWNTSGEPITNFGVCSCSENVQECPKFNYSPPHRRTYSSQVIYNLTGQRVENYLISTANEFVQKRYGGWSFGLPLTKDLRFDITGVPANRTLAKVWYDPEGYHSLPAYLNSLNNFLLRVNMSKYDAARHGIIMYSHPYPGVQDQEQATISSLIDILVALSILMGYSVTTASFVTYVVREHQTKAKQLQHISGIGVTCYWVTNFIYDMVFYLVPVAFSIGIIAIFKLPAFYSENNLGAVSLLLLLFGYATFSWMYLLAGLFHETGMAFITYVCVNLFFGINSIVSLSVVYFLSKEKPNDPTLELISETLKRIFLIFPQFCFGYGLIELSQQQSVLDFLKAYGVEYPNETFEMNKLGAMFVALVSQGTMFFSLRLLINESLIKKLRLFFRKFNSSHVRETIDEDEDVRAERLRVESGAAEFDLVQLYCLTKTYQLIHKKIIAVNNISIGIPAGECFGLLGVNGAGKTTIFKMLTGDIIPSSGNILIRNKTGSLGHVDSHSSLVGYCPQEDALDDLVTVEEHLYFYARVHGIPEKDIKETVHKLLRRLHLMPFKDRATSMCSYGTKRKLSTALALIGKPSILLLDEPSSGMDPKSKRHLWKIISEEVQNKCSVILTSHSMEECEALCTRLAIMVNGKFQCIGSLQHIKSRFGRGFTVKVHLKNNKVTMETLTKFMQLHFPKTYLKDQHLSMLEYHVPVTAGGVANIFDLLETNKTALNITNFLVSQTTLEEVFINFAKDQKSYETADTSSQGSTISVDSQDDQMES.

The helical transmembrane segment at 23 to 43 (PLWTLVLILWPVIIFIILAIT) threads the bilayer. Residues N156, N174, N214, N275, N333, N367, N383, N412, N435, N528, N543, N577, N608, N623, N648, N752, N826, N920, and N963 are each glycosylated (N-linked (GlcNAc...) asparagine). 3 helical membrane passes run 1065-1085 (VSYSLPIVLMVAWVVFIAAFV), 1112-1132 (FAWLIESVGFLLVTIVILIII), and 1145-1165 (FILFLYFSDYSFSVIAMSYLI). A glycan (N-linked (GlcNAc...) asparagine) is linked at N1170. The next 3 membrane-spanning stretches (helical) occupy residues 1174–1194 (IAALIGSLIYIIAFFPFIVLV), 1200–1220 (LSYVLKVFMSLLSPTAFSYAS), and 1250–1270 (FGWLCCLILADSFIYFLIAWY). The ABC transporter 1 domain maps to 1346-1577 (VALHGVTKIY…FGDGYHLTLT (232 aa)). 1378–1385 (GPNGAGKT) serves as a coordination point for ATP. 3 N-linked (GlcNAc...) asparagine glycosylation sites follow: N1524, N1663, and N1704. A helical transmembrane segment spans residues 1747–1767 (LIAQVILPIVFVTTAMGLGTL). N1769, N1819, N1835, N1876, N1921, and N1952 each carry an N-linked (GlcNAc...) asparagine glycan. 4 consecutive transmembrane segments (helical) span residues 1979–1999 (ATISSLIDILVALSILMGYSV), 2035–2055 (FIYDMVFYLVPVAFSIGIIAI), 2072–2092 (LLLLLFGYATFSWMYLLAGLF), and 2103–2123 (VCVNLFFGINSIVSLSVVYFL). N-linked (GlcNAc...) asparagine glycosylation is present at N2178. A helical transmembrane segment spans residues 2187–2207 (GAMFVALVSQGTMFFSLRLLI). Residues N2208 and N2223 are each glycosylated (N-linked (GlcNAc...) asparagine). Residues 2254 to 2489 (VQLYCLTKTY…FGRGFTVKVH (236 aa)) enclose the ABC transporter 2 domain. The helical transmembrane segment at 2270–2290 (IIAVNNISIGIPAGECFGLLG) threads the bilayer. An ATP-binding site is contributed by 2290–2297 (GVNGAGKT). N2318, N2542, and N2547 each carry an N-linked (GlcNAc...) asparagine glycan. Positions 2571-2595 (SYETADTSSQGSTISVDSQDDQMES) are disordered. Residues 2574–2587 (TADTSSQGSTISVD) show a composition bias toward polar residues.

It belongs to the ABC transporter superfamily. ABCA family. As to quaternary structure, interacts with NR1H2 and ABCA1; this interaction is required for ABCA1 localization to the cell surface and is necessary for its normal activity and stability. As to expression, mainly expressed in the stomach, placenta, testis and fetal brain. Expressed in the upper epidermal layers, mainly the granular layers, of skin. Expressed throughout the normal interfollicular epidermis with prominent expression in the stratum granulosum. Expressed in alpha and beta cells of pancreatic islets.

It is found in the cytoplasmic vesicle. The protein localises to the secretory vesicle membrane. The protein resides in the golgi apparatus membrane. The enzyme catalyses ATP + H2O + phospholipidSide 1 = ADP + phosphate + phospholipidSide 2.. It carries out the reaction a beta-D-glucosylceramide(in) + ATP + H2O = a beta-D-glucosylceramide(out) + ADP + phosphate + H(+). Functionally, transports lipids such as glucosylceramides from the outer to the inner leaflet of lamellar granules (LGs) membrane, whereby the lipids are finally transported to the keratinocyte periphery via the trans-Golgi network and LGs and released to the apical surface of the granular keratinocytes to form lipid lamellae in the stratum corneum of the epidermis, which is essential for skin barrier function. In the meantime, participates in the transport of the lamellar granules-associated proteolytic enzymes, in turn regulates desquamation and keratinocyte differentiation. Furthermore, is essential for the regulation of cellular cholesterol homeostasis by regulating ABCA1-dependent cholesterol efflux from macrophages through interaction with NR1H2 and ABCA1. Plays pleiotropic roles in regulating glucose stimulated insulin secretion from beta cells, regulating the morphology and fusion of insulin granules, lipid raft abundance and the actin cytoskeleton. Also involved in lung surfactant biogenesis. The protein is Glucosylceramide transporter ABCA12 of Homo sapiens (Human).